The following is a 227-amino-acid chain: Isopentenyl-diphosphate Delta-isomerase 1 (227 aa).

Lys-36 serves as a coordination point for substrate. Mg(2+) contacts are provided by His-40 and His-51. Residues Leu-49 to Ile-199 enclose the Nudix hydrolase domain. Arg-70 and Lys-74 together coordinate substrate. Residue Cys-86 is part of the active site. Substrate is bound at residue Ser-87. Residues Glu-146 and Glu-148 each contribute to the Mg(2+) site. The active site involves Glu-148. N6-acetyllysine is present on Lys-176. The Microbody targeting signal motif lies at Tyr-225–Met-227.

This sequence belongs to the IPP isomerase type 1 family. In terms of assembly, monomer. Mg(2+) is required as a cofactor.

Its subcellular location is the peroxisome. It carries out the reaction isopentenyl diphosphate = dimethylallyl diphosphate. The protein operates within isoprenoid biosynthesis; dimethylallyl diphosphate biosynthesis; dimethylallyl diphosphate from isopentenyl diphosphate: step 1/1. In terms of biological role, catalyzes the 1,3-allylic rearrangement of the homoallylic substrate isopentenyl (IPP) to its highly electrophilic allylic isomer, dimethylallyl diphosphate (DMAPP). The protein is Isopentenyl-diphosphate Delta-isomerase 1 (IDI1) of Homo sapiens (Human).